Here is a 159-residue protein sequence, read N- to C-terminus: MPYRSTEILSPGPADKAPLHRVTLTHDQRHLRRKLLHLENDDVVMLDLKEAVMLADGDLLALEGGGYIEVKAAEEALYEIRPRDRLHLIELAWHLGNRHLAAAIDEGRILIVRDPVIRAMLEGLGATVNEAVEPFHPLRGAYHGTGHHHHGHGHDPHHG.

The disordered stretch occupies residues 140–159; it reads GAYHGTGHHHHGHGHDPHHG.

The protein belongs to the UreE family.

It localises to the cytoplasm. Functionally, involved in urease metallocenter assembly. Binds nickel. Probably functions as a nickel donor during metallocenter assembly. This is Urease accessory protein UreE from Sinorhizobium fredii (strain NBRC 101917 / NGR234).